The sequence spans 261 residues: Undecaprenyl-diphosphatase (261 aa).

8 consecutive transmembrane segments (helical) span residues 1 to 21, 40 to 60, 79 to 99, 106 to 126, 140 to 160, 185 to 205, 210 to 230, and 239 to 259; these read MTVLQAIVLGLVQGVGEFLPI, GLTFDVALHLGTLIAVVAYFW, GRLFWYLIVASIPGAIFGVLF, IFRSPLLIALTLTLMGLGLWW, VNLFDGIIVGISQALAIIPGV, FLMSVPIIAGAALLKLKELPL, LAFIAGVLTAAVVGFLAIKFL, and YLLFTGYRILLAALIVAVFWL.

Belongs to the UppP family.

The protein localises to the cell membrane. The catalysed reaction is di-trans,octa-cis-undecaprenyl diphosphate + H2O = di-trans,octa-cis-undecaprenyl phosphate + phosphate + H(+). Functionally, catalyzes the dephosphorylation of undecaprenyl diphosphate (UPP). Confers resistance to bacitracin. In Moorella thermoacetica (strain ATCC 39073 / JCM 9320), this protein is Undecaprenyl-diphosphatase.